The chain runs to 386 residues: Sphingosine 1-phosphate receptor 4 (386 aa).

Residues 1–56 (MNISTWSTLVTPESCHRLAASGHSLLIVLHYNHSGRLASRGGSEDGGGLGMLRGPS) lie on the Extracellular side of the membrane. Residues asparagine 2 and asparagine 32 are each glycosylated (N-linked (GlcNAc...) asparagine). Residues 57-77 (VAAGCLVVLENAMVLAAIAIY) traverse the membrane as a helical segment. Over 78–87 (MRSRRWVYYC) the chain is Cytoplasmic. Residues 88-108 (LLNITLSDLLTGLAYVVNVLL) traverse the membrane as a helical segment. Topologically, residues 109–120 (SGTRTFQLSPVH) are extracellular. A helical membrane pass occupies residues 121–141 (WFLREGLLFMALAASTFSLLF). Topologically, residues 142-163 (TAGERFATMVRVAESGATKTSR) are cytoplasmic. A helical membrane pass occupies residues 164–184 (VYGCIGLCWLLAAILGLLPLL). Over 185 to 208 (GWNCVCAFPRCSSLLPLYSKGYVL) the chain is Extracellular. A helical transmembrane segment spans residues 209–229 (FCVVVFALILVAILSLYGAIF). Residues 230-254 (RVVRANGQKSPRPPARRKSRRLLNT) lie on the Cytoplasmic side of the membrane. The chain crosses the membrane as a helical span at residues 255–275 (VLMILVAFVVCWGPLFGLLLA). The Extracellular segment spans residues 276–290 (DIFGSNVWAQEYLRG). The helical transmembrane segment at 291–311 (MDWILALAVFNSAINPLIYSF) threads the bilayer. Topologically, residues 312-386 (RSREVQRAVL…LSSISSVRST (75 aa)) are cytoplasmic. Cysteine 325 carries S-palmitoyl cysteine lipidation.

Belongs to the G-protein coupled receptor 1 family. In terms of tissue distribution, specifically expressed in fetal and adult lymphoid and hematopoietic tissue. Expressed in lung, spleen, thymus and lymph node but absent in other non-lymphatic tissue. Coexpressed with GNA15 at the same relative levels in all tissues examined, with the highest levels in adult spleen and lung.

Its subcellular location is the cell membrane. Functionally, receptor for the lysosphingolipid sphingosine 1-phosphate (S1P). S1P is a bioactive lysophospholipid that elicits diverse physiological effect on most types of cells and tissues. May be involved in cell migration processes that are specific for lymphocytes. This Mus musculus (Mouse) protein is Sphingosine 1-phosphate receptor 4 (S1pr4).